Here is a 319-residue protein sequence, read N- to C-terminus: MSGEDYEKRLQAWVGRTLGEPRRGQDPVNVPMIRHWVEAMGDTNPVYLDEEAARATGRETVVAPASMMQAWTMRGYAATVNPEPEAGGMEELTALLAEGGYTSVVATDSEFEFHRELVPGDHISVQEQVESISPEKKTALGEGRFITTLRTYRDQRGEVVATQRWRLLRFRPKKTEQTEQKPKALRPRPAINRDNAFWFEAAKQRRLVIQRCAACKTLRHPPGPCCPHCGSFDWDTVEAAGTGQVYSYIVAHHPPHPAFEMPYVVALVELTEGTRLVTNLVGIAPDKIEIGMPVVLDWLEADPELTLPVFRPAVPQEES.

The DUF35 stretch occupies residues 199–298; sequence FEAAKQRRLV…EIGMPVVLDW (100 aa).

Belongs to the thioester dehydratase family. Heterodimer composed of ChsH1 and ChsH2. Two heterodimers combine to form a heterotetramer. The complex interacts with Ltp2 via the DUF35 C-terminal region of ChsH2.

In terms of biological role, probably involved in bile acid degradation. The protein is Probable enoyl-CoA hydratase alpha subunit of Thermomonospora curvata (strain ATCC 19995 / DSM 43183 / JCM 3096 / KCTC 9072 / NBRC 15933 / NCIMB 10081 / Henssen B9).